The following is a 240-amino-acid chain: Small ribosomal subunit protein uS2c (240 aa).

Belongs to the universal ribosomal protein uS2 family.

It is found in the plastid. Its subcellular location is the chloroplast. The chain is Small ribosomal subunit protein uS2c (rps2) from Euglena gracilis.